A 128-amino-acid chain; its full sequence is Cyclic ether formation enzyme gkaZ (128 aa).

The first 36 residues, 1–36 (MTTARALSDGLAYLLACFNAFCIQAHLTSRFSPAFS), serve as a signal peptide directing secretion. Transmembrane regions (helical) follow at residues 61–81 (LRYMFVSLNAGLGLLLALPGW) and 107–127 (WLLHFLSHLVLLSITMAAIYV).

It belongs to the cyclic ether formation enzyme xenC family.

Its subcellular location is the membrane. It participates in mycotoxin biosynthesis. Cyclic ether formation enzyme; part of the gene cluster that mediates the biosynthesis of GKK1032, fungal natural products containing a macrocyclic para-cyclophane connected to a decahydrofluorene ring system that show potent antitumor activities. Within the pathway, gkaZ functions synergistically with gkaB and gkaX to form the cyclophane. The pathway begins with the PKS-NRPS gkaA which, with the help of the trans-enoyl reductase gkaC, synthesizes the polyketide-tyrosyl acyl thioester product which can be reductively off-loaded by the terminal reductase (R) domain in gkaA. The alpha/beta hydrolase gkaG is then required to catalyze the subsequent Knoevenagel condensation that affords the 3-pyrrolin-2-one ring, whereas the three proteins gkaB, gkaX and gkaZ then function synergistically to form the cyclophane. The chain is Cyclic ether formation enzyme gkaZ from Penicillium citrinum.